The following is a 320-amino-acid chain: L-lactate dehydrogenase (320 aa).

NAD(+) is bound by residues valine 18, aspartate 39, arginine 44, tyrosine 69, and 83–84 (GA). The substrate site is built by glutamine 86 and arginine 92. NAD(+)-binding positions include threonine 105, 122–124 (AAN), and serine 147. 124–127 (NPVD) serves as a coordination point for substrate. 152 to 155 (DSAR) contacts substrate. Residue histidine 179 is the Proton acceptor of the active site. A Phosphotyrosine modification is found at tyrosine 223. Threonine 232 contributes to the substrate binding site.

The protein belongs to the LDH/MDH superfamily. LDH family. As to quaternary structure, homotetramer.

Its subcellular location is the cytoplasm. The enzyme catalyses (S)-lactate + NAD(+) = pyruvate + NADH + H(+). It participates in fermentation; pyruvate fermentation to lactate; (S)-lactate from pyruvate: step 1/1. Catalyzes the conversion of lactate to pyruvate. The chain is L-lactate dehydrogenase from Pediococcus pentosaceus (strain ATCC 25745 / CCUG 21536 / LMG 10740 / 183-1w).